A 488-amino-acid polypeptide reads, in one-letter code: Transcriptional coactivator YAP1 (488 aa).

Positions 1–21 are enriched in pro residues; sequence MEPAQQPPPQPAPQGPAPPSV. Positions 1-47 are disordered; sequence MEPAQQPPPQPAPQGPAPPSVSPAGTPAAPPAPPAGHQVVHVRGDSE. The residue at position 46 (S46) is a Phosphoserine. T48 is modified (phosphothreonine). Residues 71 to 85 are a coiled coil; it reads MRLRKLPDSFFKPPE. Residue K75 is modified to N6-lactoyllysine. Positions 76-99 are disordered; the sequence is LPDSFFKPPEPKSHSRQASTDAGT. 2 positions are modified to phosphoserine: S90 and S94. T95 carries the phosphothreonine modification. Position 104 is a phosphothreonine; by MAPK8 and MAPK9 (T104). A phosphoserine mark is found at S112, S113, S116, and S123. S149 carries the post-translational modification Phosphoserine; by LATS1 and LATS2. 2 WW domains span residues 156-189 and 215-248; these read VPLPAGWEMAKTSSGQRYFLNHNDQTTTWQDPRK and GPLPDGWEQAMTQDGEVYYINHKNKTTSWLDPRL. 2 disordered regions span residues 261–293 and 339–393; these read SAPVKQPPPLAPQSPQGGVLGGGSSNQQQQIQL and TLEQ…SSYS. S274 is modified (phosphoserine). Residues 276–488 are transactivation domain; that stretch reads QGGVLGGGSS…LDKESFLTWL (213 aa). The stretch at 283-344 forms a coiled coil; the sequence is GSSNQQQQIQ…SQLPTLEQDG (62 aa). The segment covering 348 to 376 has biased composition (polar residues); the sequence is NAVSSPGMSQELRTMTTNSSDPFLNSGTY. The residue at position 352 (S352) is a Phosphoserine; by MAPK8 and MAPK9. A phosphoserine mark is found at S356, S366, S367, and S373. Residue S382 is modified to Phosphoserine; by LATS1 and LATS2. Positions 384–393 are enriched in polar residues; that stretch reads DSGLSMSSYS. A phosphoserine; by CK1 mark is found at S385 and S388. The residue at position 392 (Y392) is a Phosphotyrosine; by ABL1. The residue at position 397 (T397) is a Phosphothreonine; by MAPK8 and MAPK9.

This sequence belongs to the YAP1 family. As to quaternary structure, part of a complex when phosphorylated that contains DSG3, PKP1, YAP1 and YWHAG; the complex is required for localization of DSG3 and YAP1 to the cell membrane in keratinocytes. Binds to the SH3 domain of the YES kinase. Binds to WBP1 and WBP2. Binds, in vitro, through the WW1 domain, to neural isoforms of ENAH that contain the PPSY motif. The phosphorylated form interacts with YWHAB. Interacts (via WW domains) with LATS1 (via PPxY motif 2). Interacts with LATS2. Interacts (via WW domain 1) with isoform JM-A of ERBB4 (via PPxY motif 2). Interacts with TEAD1, TEAD2 and TEAD3. Interacts with TP73 and HCK. Interacts with RUNX1. Interacts with TEAD4. Interacts (via WW domains) with PTPN14 (via PPxY motif 2); this interaction leads to the cytoplasmic sequestration of YAP1 and inhibits its transcriptional coactivator activity. Interacts (when phosphorylated at Ser-112) with SMAD2, SMAD3 and WWTR1. Interacts with PRRG2 (via cytoplasmic domain). Interacts (via WW domains) with PRRG4 (via cytoplasmic domain). Interacts (phosphorylated) with CLDN18; the interaction sequesters YAP1 away from the nucleus and thereby restricts transcription of YAP1 target genes. Interacts with SMAD1. Interacts with AMOT; the interaction facilitates translocation of YAP1 to the cytoplasm and tight junctions. Interacts with AMOTL2, the interaction is required for ubiquitination of AMOTL2 and localization of YAP1 to tight junctions. Post-translationally, phosphorylated by LATS1 and LATS2; leading to cytoplasmic translocation and inactivation. Phosphorylated by ABL1; leading to YAP1 stabilization, enhanced interaction with TP73 and recruitment onto proapoptotic genes; in response to DNA damage. Phosphorylation at Ser-385 and Ser-388 by CK1 is triggered by previous phosphorylation at Ser-382 by LATS proteins and leads to YAP1 ubiquitination by SCF(beta-TRCP) E3 ubiquitin ligase and subsequent degradation. Phosphorylated at Thr-104, Ser-123, Ser-352 and Thr-397 by MAPK8/JNK1 and MAPK9/JNK2, which is required for the regulation of apoptosis by YAP1. Lactylation by AARS1 promotes nuclear localization and stabilization of YAP1, leading to increased Hippo signaling pathway. Delactylated by SIRT1. In terms of processing, ubiquitinated by SCF(beta-TRCP) E3 ubiquitin ligase. Isoforms lacking the transactivation domain seen in striatal neurons (at protein level). Ubiquitous. Isoform 2 is expressed at higher levels in the neural tissues. In the embryo, it is expressed in brain, eye, and the maxillary and frontonasal components of the primary palate.

The protein localises to the cytoplasm. The protein resides in the nucleus. It localises to the cell junction. It is found in the tight junction. Its subcellular location is the cell membrane. Its function is as follows. Transcriptional regulator with dual roles as a coactivator and corepressor. Critical downstream regulatory target in the Hippo signaling pathway, crucial for organ size control and tumor suppression by restricting proliferation and promoting apoptosis. The Hippo signaling pathway core involves a kinase cascade featuring STK3/MST2 and STK4/MST1, along with its regulatory partner SAV1, which phosphorylates and activates LATS1/2 in complex with their regulatory protein, MOB1. This activation leads to the phosphorylation and inactivation of the YAP1 oncoprotein and WWTR1/TAZ. Phosphorylation of YAP1 by LATS1/2 prevents its nuclear translocation, thereby regulating the expression of its target genes. The transcriptional regulation of gene expression requires TEAD transcription factors and modulates cell growth, anchorage-independent growth, and induction of epithelial-mesenchymal transition (EMT). Plays a key role in tissue tension and 3D tissue shape by regulating the cortical actomyosin network, acting via ARHGAP18, a Rho GTPase activating protein that suppresses F-actin polymerization. It also suppresses ciliogenesis by acting as a transcriptional corepressor of TEAD4 target genes AURKA and PLK1. In conjunction with WWTR1, regulates TGFB1-dependent SMAD2 and SMAD3 nuclear accumulation. Synergizes with WBP2 to enhance PGR activity. The chain is Transcriptional coactivator YAP1 (Yap1) from Mus musculus (Mouse).